A 271-amino-acid chain; its full sequence is Aspartate/glutamate leucyltransferase (271 aa).

This sequence belongs to the R-transferase family. Bpt subfamily.

It is found in the cytoplasm. The enzyme catalyses N-terminal L-glutamyl-[protein] + L-leucyl-tRNA(Leu) = N-terminal L-leucyl-L-glutamyl-[protein] + tRNA(Leu) + H(+). It catalyses the reaction N-terminal L-aspartyl-[protein] + L-leucyl-tRNA(Leu) = N-terminal L-leucyl-L-aspartyl-[protein] + tRNA(Leu) + H(+). In terms of biological role, functions in the N-end rule pathway of protein degradation where it conjugates Leu from its aminoacyl-tRNA to the N-termini of proteins containing an N-terminal aspartate or glutamate. This chain is Aspartate/glutamate leucyltransferase, found in Acinetobacter baylyi (strain ATCC 33305 / BD413 / ADP1).